We begin with the raw amino-acid sequence, 345 residues long: Phenylalanine--tRNA ligase alpha subunit (345 aa).

E253 lines the Mg(2+) pocket.

This sequence belongs to the class-II aminoacyl-tRNA synthetase family. Phe-tRNA synthetase alpha subunit type 1 subfamily. As to quaternary structure, tetramer of two alpha and two beta subunits. Requires Mg(2+) as cofactor.

The protein localises to the cytoplasm. The enzyme catalyses tRNA(Phe) + L-phenylalanine + ATP = L-phenylalanyl-tRNA(Phe) + AMP + diphosphate + H(+). The chain is Phenylalanine--tRNA ligase alpha subunit from Nitratidesulfovibrio vulgaris (strain DP4) (Desulfovibrio vulgaris).